The sequence spans 53 residues: Tryptophan RNA-binding attenuator protein inhibitory protein (53 aa).

2 CXXCXGXG motif repeats span residues C12–G19 and C26–G33.

As to quaternary structure, homopentamer or homohexamer.

It localises to the cytoplasm. In terms of biological role, by forming a complex with tryptophan-activated TRAP, and masking its RNA binding site, it inhibits TRAP's RNA binding ability, thereby abolishing TRAP regulation of gene expression, leading to antitermination and increased trp operon expression. AT acts by competing with messenger RNA for the RNA binding domain of TRAP. The polypeptide is Tryptophan RNA-binding attenuator protein inhibitory protein (rtpA) (Bacillus subtilis (strain 168)).